The primary structure comprises 427 residues: Tegument protein VP16 homolog (427 aa).

Belongs to the herpesviridae tegument protein VP16 protein family.

It localises to the virion tegument. It is found in the host nucleus. Functionally, transcriptional activator of immediate-early (IE) gene products (alpha genes). Acts as a key activator of lytic infection by initiating the lytic program through the assembly of the transcriptional regulatory VP16-induced complex composed of VP16 and two cellular factors, HCFC1 and POU2F1. VP16-induced complex represents a regulatory switch: when it is on, it promotes IE-gene expression and thus lytic infection, and when it is off, it limits IE-gene transcription favoring latent infection. In terms of biological role, may play a role in the aggregation of tegument proteins around nucleocapsids during virus morphogenesis. This Gallus gallus (Chicken) protein is Tegument protein VP16 homolog (MDV061).